The chain runs to 380 residues: Ubiquitin-like protein 7 (380 aa).

The 81-residue stretch at 18-98 (APKSILQLPE…VLRKSWPEPD (81 aa)) folds into the Ubiquitin-like domain. Residues 200–313 (TPMPGADSSS…SSGVQSGTPI (114 aa)) form a disordered region. A compositionally biased stretch (low complexity) spans 206–221 (DSSSRSMPSSSYRDMP). Residue S230 is modified to Phosphoserine. 2 stretches are compositionally biased toward low complexity: residues 239 to 253 (STRSTPSSSTPSSRP) and 270 to 293 (SELATALALASTPESSSHTPTPGT). Residues 294–313 (QGHSSGTSPMSSGVQSGTPI) are compositionally biased toward polar residues. Positions 333 to 377 (SLQIQWQPQLQQLRDMGIQDDELSLRALQATGGDIQAALELIFAG) constitute a UBA domain.

In terms of assembly, binds ubiquitin. Interacts with MAVS; this interaction enhances TRIM21-dependent 'Lys-27'-linked polyubiquitination of MAVS. In terms of processing, deubiquitinated by OTUD4 which stabilizes UBL7 expression.

Its function is as follows. Interferon-stimulated protein that positively regulates RNA virus-triggered innate immune signaling. Mechanistically, promotes 'Lys-27'-linked polyubiquitination of MAVS through TRIM21 leading to enhanced the IFN signaling pathway. This chain is Ubiquitin-like protein 7 (Ubl7), found in Mus musculus (Mouse).